The primary structure comprises 525 residues: D-aminopeptidase (525 aa).

The active-site Nucleophile is the serine 62. The active-site Proton donor/acceptor is lysine 65. Residues 485-495 (PRALDHTAPGD) form an important for specificity region. Aspartate 489 contacts substrate.

The protein belongs to the peptidase S12 family. As to quaternary structure, homodimer.

It carries out the reaction Release of an N-terminal D-amino acid from a peptide, Xaa-|-Yaa-, in which Xaa is preferably D-Ala, D-Ser or D-Thr. D-amino acid amides and methyl esters also are hydrolyzed, as is glycine amide.. Its activity is regulated as follows. Inhibited by beta-lactam compounds such as 6-aminopenicillic acid, 7-aminocephalosporanic acid, benzylpenicillin and ampicillin. Inhibited by p-chloromercuribenzoate. Functionally, hydrolyzes N-terminal residues in D-amino acid-containing peptides. This chain is D-aminopeptidase, found in Gluconobacter oxydans (strain 621H) (Gluconobacter suboxydans).